The following is a 484-amino-acid chain: L-amino-acid oxidase (484 aa).

Cys-8 and Cys-171 form a disulfide bridge. FAD is bound by residues 41–42, 61–62, and Arg-69; these read MS and EA. His-73 is a binding site for Zn(2+). 85 to 88 contributes to the FAD binding site; that stretch reads GPMR. Position 88 (Arg-88) interacts with substrate. A glycan (N-linked (GlcNAc...) asparagine) is linked at Asn-170. His-221 provides a ligand contact to substrate. Val-259 contacts FAD. Glu-277 is a Zn(2+) binding site. Cys-329 and Cys-410 form a disulfide bridge. Tyr-370 serves as a coordination point for substrate. FAD is bound by residues Glu-455 and 462–467; that span reads GWIDST. 462–463 contacts substrate; sequence GW.

This sequence belongs to the flavin monoamine oxidase family. FIG1 subfamily. As to quaternary structure, homodimer; non-covalently linked. FAD serves as cofactor. Expressed by the venom gland.

The protein resides in the secreted. It carries out the reaction an L-alpha-amino acid + O2 + H2O = a 2-oxocarboxylate + H2O2 + NH4(+). Catalyzes an oxidative deamination of predominantly hydrophobic and aromatic L-amino acids, thus producing hydrogen peroxide that may contribute to the diverse toxic effects of this enzyme. Exhibits diverse biological activities, such as hemorrhage, hemolysis, edema, apoptosis of vascular endothelial cells or tumor cell lines, antibacterial and antiparasitic activities, as well as regulation of platelet aggregation. Effects of snake L-amino oxidases on platelets are controversial, since they either induce aggregation or inhibit agonist-induced aggregation. These different effects are probably due to different experimental conditions. The sequence is that of L-amino-acid oxidase from Vipera ammodytes ammodytes (Western sand viper).